We begin with the raw amino-acid sequence, 131 residues long: Leptin receptor overlapping transcript-like 1 (131 aa).

The next 4 membrane-spanning stretches (helical) occupy residues 7-27 (LISL…GCAL), 32-52 (QYWP…YCIA), 69-89 (LAIF…IVFA), and 100-120 (ALVL…FLVF).

Belongs to the OB-RGRP/VPS55 family.

The protein resides in the membrane. Negatively regulates growth hormone (GH) receptor cell surface expression in liver. May play a role in liver resistance to GH during periods of reduced nutrient availability. This Bos taurus (Bovine) protein is Leptin receptor overlapping transcript-like 1 (LEPROTL1).